We begin with the raw amino-acid sequence, 316 residues long: L-lactate dehydrogenase 1 (316 aa).

4 residues coordinate NAD(+): valine 17, aspartate 38, lysine 43, and tyrosine 69. Substrate contacts are provided by residues arginine 92 and 124–127 (NPVD). NAD(+) is bound by residues 122 to 124 (VSN) and threonine 147. Substrate is bound at residue 152–155 (DTSR). Histidine 179 acts as the Proton acceptor in catalysis. Threonine 234 lines the substrate pocket.

This sequence belongs to the LDH/MDH superfamily. LDH family. Homotetramer.

The protein localises to the cytoplasm. It catalyses the reaction (S)-lactate + NAD(+) = pyruvate + NADH + H(+). The protein operates within fermentation; pyruvate fermentation to lactate; (S)-lactate from pyruvate: step 1/1. Functionally, catalyzes the conversion of lactate to pyruvate. The protein is L-lactate dehydrogenase 1 of Bifidobacterium longum subsp. longum (strain ATCC 15707 / DSM 20219 / JCM 1217 / NCTC 11818 / E194b).